The primary structure comprises 388 residues: NADH-quinone oxidoreductase subunit D 2 (388 aa).

This sequence belongs to the complex I 49 kDa subunit family. NDH-1 is composed of 14 different subunits. Subunits NuoB, C, D, E, F, and G constitute the peripheral sector of the complex.

It is found in the cell membrane. It catalyses the reaction a quinone + NADH + 5 H(+)(in) = a quinol + NAD(+) + 4 H(+)(out). NDH-1 shuttles electrons from NADH, via FMN and iron-sulfur (Fe-S) centers, to quinones in the respiratory chain. The immediate electron acceptor for the enzyme in this species is believed to be a menaquinone. Couples the redox reaction to proton translocation (for every two electrons transferred, four hydrogen ions are translocated across the cytoplasmic membrane), and thus conserves the redox energy in a proton gradient. The protein is NADH-quinone oxidoreductase subunit D 2 of Salinispora tropica (strain ATCC BAA-916 / DSM 44818 / JCM 13857 / NBRC 105044 / CNB-440).